The chain runs to 773 residues: Beta-D-xylosidase 3 (773 aa).

An N-terminal signal peptide occupies residues 1 to 23; that stretch reads MASRNRALFSVSTLFLCFIVCIS. A glycan (N-linked (GlcNAc...) asparagine) is linked at Asn131. Asp298 is a catalytic residue. 3 N-linked (GlcNAc...) asparagine glycosylation sites follow: Asn349, Asn432, and Asn770.

The protein belongs to the glycosyl hydrolase 3 family. Expressed in flowers and siliques, in the early stage of seed formation and not at seed maturation. Detected exclusively in the endosperm of very young seeds when the embryo is at the globular stage.

Its subcellular location is the secreted. The protein localises to the extracellular space. The protein resides in the extracellular matrix. It carries out the reaction Hydrolysis of terminal non-reducing alpha-L-arabinofuranoside residues in alpha-L-arabinosides.. Its function is as follows. Involved in the hydrolysis of arabinan. Can hydrolyze (1,3)-alpha-, (1,2)-alpha-linked side group residues and non-reducing terminal L-arabinofuranose residues of debranched (1,5)-alpha-L-arabinan backbone. Also acts as a beta-D-xylosidase, releasing D-xylose from arabinoxylan and xylan. In Arabidopsis thaliana (Mouse-ear cress), this protein is Beta-D-xylosidase 3 (BXL3).